The chain runs to 139 residues: Growth factor (139 aa).

A signal peptide spans 1–19 (MSMKYLMLLFATMIIRSFA). N34 carries an N-linked (GlcNAc...) asparagine; by host glycan. An EGF-like domain is found at 41–81 (AIRLCGPEGDGYCLHGDCIHARDINGMYCRCSHGYTGIRCQ). Cystine bridges form between C45–C58, C53–C69, and C71–C80. N95 is a glycosylation site (N-linked (GlcNAc...) asparagine; by host).

This sequence belongs to the orthopoxvirus OPG019 family.

The protein localises to the secreted. In terms of biological role, stimulates cellular proliferation (hyperplasia)and mobility around infected cells to promote rapid and efficient spread of infection. The sequence is that of Growth factor (OPG019) from Camelus.